A 190-amino-acid chain; its full sequence is Large ribosomal subunit protein eL19 (190 aa).

2 disordered regions span residues 56 to 85 (TVHS…KGTK) and 166 to 190 (NRAA…EAAN). Positions 72-83 (AGRHMGYGKRKG) are enriched in basic residues. Residues 166-184 (NRAARERRQQRLAEKKEAL) are compositionally biased toward basic and acidic residues.

This sequence belongs to the eukaryotic ribosomal protein eL19 family. Component of the large ribosomal subunit. Mature ribosomes consist of a small (40S) and a large (60S) subunit. The 40S subunit contains about 32 different proteins and 1 molecule of RNA (18S). The 60S subunit contains 45 different proteins and 3 molecules of RNA (25S, 5.8S and 5S).

It localises to the cytoplasm. Its function is as follows. Component of the ribosome, a large ribonucleoprotein complex responsible for the synthesis of proteins in the cell. The small ribosomal subunit (SSU) binds messenger RNAs (mRNAs) and translates the encoded message by selecting cognate aminoacyl-transfer RNA (tRNA) molecules. The large subunit (LSU) contains the ribosomal catalytic site termed the peptidyl transferase center (PTC), which catalyzes the formation of peptide bonds, thereby polymerizing the amino acids delivered by tRNAs into a polypeptide chain. The nascent polypeptides leave the ribosome through a tunnel in the LSU and interact with protein factors that function in enzymatic processing, targeting, and the membrane insertion of nascent chains at the exit of the ribosomal tunnel. RPL19A may play a role in the last stages of translation initiation, in particular subunit joining and shedding/releasing factors. The protein is Large ribosomal subunit protein eL19 of Candida albicans (strain SC5314 / ATCC MYA-2876) (Yeast).